Here is an 838-residue protein sequence, read N- to C-terminus: Probable glucan 1,3-beta-glucosidase D (838 aa).

Residues 1-23 (MPSHSRSRDRYRGRDESEPERDR) are compositionally biased toward basic and acidic residues. The interval 1 to 298 (MPSHSRSRDR…GASDSDMDGA (298 aa)) is disordered. The Cytoplasmic segment spans residues 1–310 (MPSHSRSRDR…GTPFWKKKKT (310 aa)). Residues 35 to 45 (DYEDDELDDDD) show a composition bias toward acidic residues. Basic and acidic residues-rich tracts occupy residues 111-124 (DSPRRRDRHRDGDR), 149-164 (SRDDRRERAYESEREA), 200-221 (AKLRSEYDKEDRSRAKADAKAE), and 234-246 (QPRRLDPFPEETP). Residues 311 to 331 (WIAVGVVVVLLAIIIPVAVVV) traverse the membrane as a helical; Signal-anchor for type II membrane protein segment. The Extracellular segment spans residues 332 to 838 (SKKNNEKKSD…PDFGDLPENY (507 aa)). The segment at 335–359 (NNEKKSDSTTDDTTPRNSNLDGISR) is disordered. Asparagine 383, asparagine 388, asparagine 400, asparagine 553, and asparagine 565 each carry an N-linked (GlcNAc...) asparagine glycan. Residue glutamate 604 is the Proton donor of the active site. N-linked (GlcNAc...) asparagine glycans are attached at residues asparagine 643 and asparagine 696. Catalysis depends on glutamate 709, which acts as the Nucleophile.

The protein belongs to the glycosyl hydrolase 5 (cellulase A) family.

Its subcellular location is the cell membrane. The enzyme catalyses Successive hydrolysis of beta-D-glucose units from the non-reducing ends of (1-&gt;3)-beta-D-glucans, releasing alpha-glucose.. Glucosidase involved in the degradation of cellulosic biomass. Active on lichenan. The sequence is that of Probable glucan 1,3-beta-glucosidase D (exgD) from Aspergillus terreus (strain NIH 2624 / FGSC A1156).